Consider the following 354-residue polypeptide: Sorbitol dehydrogenase (354 aa).

Position 43 (cysteine 43) interacts with Zn(2+). Tyrosine 49 provides a ligand contact to substrate. Residues histidine 67 and glutamate 68 each contribute to the Zn(2+) site. Residue glutamate 153 coordinates substrate. Positions 181, 201, and 206 each coordinate NAD(+). Serine 208 and serine 222 each carry phosphoserine. Residues 270–272 (VGL) and 294–296 (VFR) each bind NAD(+). Positions 296 and 297 each coordinate substrate.

This sequence belongs to the zinc-containing alcohol dehydrogenase family. As to quaternary structure, homotetramer. The cofactor is Zn(2+). In terms of tissue distribution, expressed in liver.

It localises to the mitochondrion membrane. The protein localises to the cell projection. It is found in the cilium. The protein resides in the flagellum. The catalysed reaction is xylitol + NAD(+) = D-xylulose + NADH + H(+). The enzyme catalyses L-iditol + NAD(+) = keto-L-sorbose + NADH + H(+). It catalyses the reaction keto-D-fructose + NADH + H(+) = D-sorbitol + NAD(+). Its function is as follows. Polyol dehydrogenase that catalyzes the reversible NAD(+)-dependent oxidation of various sugar alcohols. Is mostly active with xylitol, L-iditol and D-sorbitol (D-glucitol) as substrates, leading to the C2-oxidized products D-xylulose, L-sorbose and D-fructose, respectively. Is a key enzyme in the polyol pathway that interconverts glucose and fructose via sorbitol, which constitutes an important alternate route for glucose metabolism. May play a role in sperm motility by using sorbitol as an alternative energy source for sperm motility. The sequence is that of Sorbitol dehydrogenase (SORD) from Ovis aries (Sheep).